A 237-amino-acid chain; its full sequence is Ribosomal RNA small subunit methyltransferase G (237 aa).

Residues G78, F83, 129–130 (AE), and R148 contribute to the S-adenosyl-L-methionine site. The disordered stretch occupies residues 216–237 (SKKKETPNKYPRKAGTPNKKPL).

Belongs to the methyltransferase superfamily. RNA methyltransferase RsmG family.

The protein resides in the cytoplasm. Specifically methylates the N7 position of a guanine in 16S rRNA. The protein is Ribosomal RNA small subunit methyltransferase G of Streptococcus agalactiae serotype Ia (strain ATCC 27591 / A909 / CDC SS700).